The primary structure comprises 199 residues: Pneumococcal vaccine antigen A homolog (199 aa).

It localises to the cell surface. In Streptococcus pyogenes serotype M6 (strain ATCC BAA-946 / MGAS10394), this protein is Pneumococcal vaccine antigen A homolog (pvaA).